The primary structure comprises 298 residues: Elongation factor Ts (298 aa).

Residues 78-81 form an involved in Mg(2+) ion dislocation from EF-Tu region; that stretch reads TDFV.

Belongs to the EF-Ts family.

It localises to the cytoplasm. Its function is as follows. Associates with the EF-Tu.GDP complex and induces the exchange of GDP to GTP. It remains bound to the aminoacyl-tRNA.EF-Tu.GTP complex up to the GTP hydrolysis stage on the ribosome. This Mycoplasmopsis agalactiae (strain NCTC 10123 / CIP 59.7 / PG2) (Mycoplasma agalactiae) protein is Elongation factor Ts.